The sequence spans 305 residues: MKKFLKVWSVLTIICMTVVVFGGALVTKTGSADGCGNSWPLCNGQLVRLTDVTPEKLIEFMHRMTTGISSIFVIVLAICAWIYMKNRRETKPLAIIAVLFLIIQALMGMAAVVWGQNPYIMALHFGISIICYASIVLLALMIFEVDRKFDARNLVMGTKLRINIYALTIYTYLAVYTGALVRHEKASMAVPVWPFENGHFIMPTSVQDYVQYFHRLAAFILIVWLLYVTWLVFRDYRRYRVLTFSMVLSLVFIALQAVTGALSVYTGVNLYIALAHSLIITMLFALLCYLCLLASRSKSNRLRIK.

The Cytoplasmic segment spans residues 1–6 (MKKFLK). The helical transmembrane segment at 7 to 27 (VWSVLTIICMTVVVFGGALVT) threads the bilayer. Residues 28–63 (KTGSADGCGNSWPLCNGQLVRLTDVTPEKLIEFMHR) lie on the Extracellular side of the membrane. Cysteine 35 and cysteine 42 are disulfide-bonded. Glutamate 59 is a catalytic residue. Histidine 62 contributes to the heme o binding site. A helical transmembrane segment spans residues 64–84 (MTTGISSIFVIVLAICAWIYM). Residues 85-92 (KNRRETKP) are Cytoplasmic-facing. Residues 93 to 113 (LAIIAVLFLIIQALMGMAAVV) traverse the membrane as a helical segment. At 114-122 (WGQNPYIMA) the chain is on the extracellular side. The chain crosses the membrane as a helical span at residues 123-143 (LHFGISIICYASIVLLALMIF). A heme o-binding site is contributed by histidine 124. Topologically, residues 144 to 160 (EVDRKFDARNLVMGTKL) are cytoplasmic. A helical transmembrane segment spans residues 161-181 (RINIYALTIYTYLAVYTGALV). Topologically, residues 182–212 (RHEKASMAVPVWPFENGHFIMPTSVQDYVQY) are extracellular. A helical membrane pass occupies residues 213-233 (FHRLAAFILIVWLLYVTWLVF). Histidine 214 serves as a coordination point for heme b. Topologically, residues 234–240 (RDYRRYR) are cytoplasmic. The helical transmembrane segment at 241 to 261 (VLTFSMVLSLVFIALQAVTGA) threads the bilayer. The Extracellular segment spans residues 262–271 (LSVYTGVNLY). The chain crosses the membrane as a helical span at residues 272–292 (IALAHSLIITMLFALLCYLCL). Histidine 276 serves as a coordination point for heme b. Residues 293–305 (LASRSKSNRLRIK) are Cytoplasmic-facing.

Belongs to the COX15/CtaA family. Type 1 subfamily. Interacts with CtaB. Requires heme b as cofactor.

It is found in the cell membrane. The enzyme catalyses Fe(II)-heme o + 2 A + H2O = Fe(II)-heme a + 2 AH2. The protein operates within porphyrin-containing compound metabolism; heme A biosynthesis; heme A from heme O: step 1/1. Its function is as follows. Catalyzes the conversion of heme O to heme A by two successive hydroxylations of the methyl group at C8. The first hydroxylation forms heme I, the second hydroxylation results in an unstable dihydroxymethyl group, which spontaneously dehydrates, resulting in the formyl group of heme A. This is Heme A synthase from Listeria monocytogenes serotype 4b (strain F2365).